We begin with the raw amino-acid sequence, 684 residues long: Transcriptional regulatory protein RCO1 (684 aa).

Methionine 1 is subject to N-acetylmethionine. Residues 1–48 form a disordered region; that stretch reads MDTSKKDTTRSPSHSNSSSPSSSSLSSSSSKEKKRPKRLSSQNVNYDL. A compositionally biased stretch (low complexity) spans 10–29; it reads RSPSHSNSSSPSSSSLSSSS. Serine 68 carries the post-translational modification Phosphoserine. The PHD-type 1 zinc finger occupies 260–309; that stretch reads EDFCSACNQSGSFLCCDTCPKSFHFLCLDPPIDPNNLPKGDWHCNECKFK. The segment at 414-472 adopts a PHD-type 2; atypical zinc-finger fold; sequence FLICYKCNQTRLGSWSHPENSRLIMTCDYCQTPWHLDCVPRASFKNLGSKWKCPLHSPT. At serine 683 the chain carries Phosphoserine.

As to quaternary structure, component of the RPD3C(S) complex composed of at least EAF3, RCO1, RPD3, SIN3, and UME1.

It is found in the nucleus. Functionally, catalytic component of the RPD3C(S) histone deacetylase complex responsible for the deacetylation of lysine residues on the N-terminal part of the core histones (H2A, H2B, H3 and H4). Histone deacetylation gives a tag for epigenetic repression and plays an important role in transcriptional regulation, cell cycle progression, DNA damage response, osmotic stress response and developmental events. The protein is Transcriptional regulatory protein RCO1 (RCO1) of Saccharomyces cerevisiae (strain ATCC 204508 / S288c) (Baker's yeast).